The chain runs to 180 residues: Large ribosomal subunit protein uL5 (180 aa).

The protein belongs to the universal ribosomal protein uL5 family. As to quaternary structure, part of the 50S ribosomal subunit; part of the 5S rRNA/L5/L18/L25 subcomplex. Contacts the 5S rRNA and the P site tRNA. Forms a bridge to the 30S subunit in the 70S ribosome.

Its function is as follows. This is one of the proteins that bind and probably mediate the attachment of the 5S RNA into the large ribosomal subunit, where it forms part of the central protuberance. In the 70S ribosome it contacts protein S13 of the 30S subunit (bridge B1b), connecting the 2 subunits; this bridge is implicated in subunit movement. Contacts the P site tRNA; the 5S rRNA and some of its associated proteins might help stabilize positioning of ribosome-bound tRNAs. This is Large ribosomal subunit protein uL5 from Ralstonia nicotianae (strain ATCC BAA-1114 / GMI1000) (Ralstonia solanacearum).